Reading from the N-terminus, the 1070-residue chain is MYCCSAQDSKMDYKRRFLLGGSKQKVQQHQQYPMPELGRALSAPLASTATTAPLGSLTAAGSCHHAMPHTTPIADIQQGISKYLDALNVFCRASTFLTDLFSTVFRNSHYSKAATQLKDVQEHVMEAASRLTSAIKPEIAKMLMELSAGAANFTDQKEFSLQDIEVLGRCFLTVVQVHFQFLTHALQKVQPVAHSCFAEVIVPEKKNSGSGGGLSGMGHTPEVEEAVRSWRGAAEATSRLRERGCDGCLAGIEVQQLFCSQSAAIPEHQLKELNIKIDSALQAYKIALESLGHCEYAMKAGFHLNPKAIEASLQGCCSEAEAQQTGRRQTPPQPMQCELPTVPVQIGSHFLKGVSFNESAADNLKLKTHTMLQLMKEAGCYNGITSRDDFPVTEVLNQVCPSTWRGACKTAVQLLFGQAGLVVVDTAQIENKEAYAPQISLEGSRIVVQVPSTWCLKEDPATMSLLQRSLDPEKTLGLVDVLYTAVLDLNRWRAGREQALPCIQIQLQREICDFGNQADLPSGNGNKSSGGLQKTFSKLTSRFTKKASCTSSSSSTNYSIQNTPSKNIFIAGCSEEKAKMPGNIDTRLQSILNIGNFPRTTDPSQSAQNSSNTVANGFLMERRENFLHGDDGKDEKGMNLPTDQEMQEVIDFLSGFNMGQSHQGSPLVTRHNSAATAMVTEQKAGAMQPQQPSLPVPPPPRAPQAGAHTPLTPQPGLAPQQQSPKQQQPQVQYYQHLLQPIGPQQPPPQPRAPGKWVHGSSQQPAQAVGAGLSPLGQWPGISDLSSDLYSLGLVSSYMDNVMSEVLGQKPQGPRNNTWPNRDQSDGVFGMLGEILPFDPAVGSDPEFARYVAGVSQAMQQKRQAQHGRRPGNPRGNWPPMDDAHRTWPFPEFFTEGDGLHGGWSGAQGDSASSSDETSSANGDSLFSMFSGPDLVAAVKQRRKHSSGEQDTSTLPSPPLLTTVEDVNQDNKTKTWPPKAPWQHPSPLPSTLPSPSAPLYAVTSPGSQWNDTMQMLQSPVWAATNDCSAAAFSYVQTPPQPPPPPAHKAAPKGFKAFPGKGERRPAYLPQY.

3 disordered regions span residues 681 to 771 (EQKA…VGAG), 855 to 992 (SQAM…STLP), and 1032 to 1070 (SYVQ…LPQY). The span at 692-702 (PSLPVPPPPRA) shows a compositional bias: pro residues. Low complexity-rich tracts occupy residues 719–742 (PQQQ…QPIG), 906–924 (AQGD…NGDS), and 951–962 (TSTLPSPPLLTT). The residue at position 723 (serine 723) is a Phosphoserine. Positions 977-992 (PKAPWQHPSPLPSTLP) are enriched in pro residues. Over residues 1046-1058 (HKAAPKGFKAFPG) the composition is skewed to low complexity.

Interacts with AGO2 and TNRC6A.

It localises to the cytoplasm. Its subcellular location is the P-body. Its function is as follows. Acts as an effector of RAC1. Associates with CCR4-NOT complex which is one of the major cellular mRNA deadenylases and is linked to various cellular processes including bulk mRNA degradation, miRNA-mediated repression, translational repression during translational initiation and general transcription regulation. May also play a role in miRNA silencing machinery. The protein is Granule associated Rac and RHOG effector protein 1 of Homo sapiens (Human).